The sequence spans 384 residues: uncharacterized protein (384 aa).

A disordered region spans residues 1-116 (MTEMPKKKFS…FPAAPPPMDS (116 aa)). 2 stretches are compositionally biased toward basic and acidic residues: residues 14–70 (ARGD…RAGD) and 78–95 (RFKDKDRDKPRYGDDRPR). S-adenosyl-L-methionine-binding residues include Gly318, Ile338, and Leu347.

This sequence belongs to the class IV-like SAM-binding methyltransferase superfamily. RNA methyltransferase TrmH family.

This is an uncharacterized protein from Synechocystis sp. (strain ATCC 27184 / PCC 6803 / Kazusa).